A 574-amino-acid chain; its full sequence is DNA-directed primase/polymerase protein (574 aa).

A coiled-coil region spans residues 2–22 (KRKWEERVKKVEELASYYERN). Substrate contacts are provided by residues Arg-76, 116-118 (DLE), 167-171 (KFSRH), 291-294 (RNFR), and Lys-300. 2 residues coordinate Mn(2+): Asp-116 and Glu-118. Residues Cys-424, His-431, Cys-451, and Cys-456 each coordinate Zn(2+). The Zinc knuckle motif signature appears at 424–457 (CENIGRAHRSNNIMILVDLKKEVWYQKCHDPVCR).

The protein belongs to the eukaryotic-type primase small subunit family. The cofactor is Mn(2+).

It is found in the nucleus. Its subcellular location is the mitochondrion matrix. The protein resides in the chromosome. It catalyses the reaction ssDNA + n NTP = ssDNA/pppN(pN)n-1 hybrid + (n-1) diphosphate.. The enzyme catalyses DNA(n) + a 2'-deoxyribonucleoside 5'-triphosphate = DNA(n+1) + diphosphate. In terms of biological role, DNA primase and DNA polymerase required to tolerate replication-stalling lesions by bypassing them. Required to facilitate mitochondrial and nuclear replication fork progression by initiating de novo DNA synthesis using dNTPs and acting as an error-prone DNA polymerase able to bypass certain DNA lesions. Shows a high capacity to tolerate DNA damage lesions such as 8oxoG and abasic sites in DNA. Provides different translesion synthesis alternatives when DNA replication is stalled: able to synthesize DNA primers downstream of lesions, such as UV lesions, R-loops and G-quadruplexes, to allow DNA replication to continue. Can also realign primers ahead of 'unreadable lesions' such as abasic sites and 6-4 photoproduct (6-4 pyrimidine-pyrimidinone), thereby skipping the lesion. Repriming avoids fork degradation while leading to accumulation of internal ssDNA gaps behind the forks. Also able to incorporate nucleotides opposite DNA lesions such as 8oxoG, like a regular translesion synthesis DNA polymerase. Also required for reinitiating stalled forks after ultraviolet (UV) damage during nuclear DNA replication. Required for mitochondrial DNA (mtDNA) synthesis and replication, by reinitiating synthesis after UV damage or in the presence of chain-terminating nucleotides. In addition to its role in DNA damage response, also required to maintain efficient nuclear and mitochondrial DNA replication in unperturbed cells. This is DNA-directed primase/polymerase protein from Gallus gallus (Chicken).